A 370-amino-acid chain; its full sequence is Translocating chain-associated membrane protein 2 (370 aa).

Residues 1–22 (MAFRRRTKSYPLFSQEFVIHNH) lie on the Cytoplasmic side of the membrane. A helical membrane pass occupies residues 23–43 (ADIGFCLVLCVLIGLMFEVTA). Residues 44-75 (KTAFLFILPQYNISVPTADSETVHYHYGPKDL) lie on the Extracellular side of the membrane. N-linked (GlcNAc...) asparagine glycosylation occurs at Asn55. Residues 76–96 (VTILFYIFITIILHAVVQEYI) traverse the membrane as a helical segment. The Cytoplasmic portion of the chain corresponds to 97–119 (LDKISKRLHLSKVKHSKFNESGQ). The 210-residue stretch at 112-321 (SKFNESGQLV…HSQLRHWREY (210 aa)) folds into the TLC domain. The chain crosses the membrane as a helical span at residues 120–140 (LVVFHFTSVIWCFYVVVTEGY). Residues 141-159 (LTNPRSLWEDYPHVHLPFQ) lie on the Extracellular side of the membrane. Residues 160–180 (VKFFYLCQLAYWLHALPELYF) form a helical membrane-spanning segment. Over 181–191 (QKVRKEEIPRQ) the chain is Cytoplasmic. A helical transmembrane segment spans residues 192–209 (LQYICLYLVHIAGAYLLN). Over 210–214 (LSRLG) the chain is Extracellular. The helical transmembrane segment at 215-235 (LILLLLQYSTEFLFHTARLFY) threads the bilayer. Residues 236 to 250 (FADENNEKLFSAWAA) lie on the Cytoplasmic side of the membrane. A helical membrane pass occupies residues 251–271 (VFGVTRLFILTLAVLAIGFGL). The Extracellular portion of the chain corresponds to 272 to 287 (ARMENQAFDPEKGNFN). Residues 288–308 (TLFCRLCVLLLVCAAQAWLMW) form a helical membrane-spanning segment. The Cytoplasmic segment spans residues 309-370 (RFIHSQLRHW…SPRTKKLKSP (62 aa)). Positions 348 to 370 (YHENGVVKAENGTSPRTKKLKSP) are disordered.

It belongs to the TRAM family. As to quaternary structure, interacts with SERCA2B and COL1A1.

Its subcellular location is the membrane. Necessary for collagen type I synthesis. May couple the activity of the ER Ca(2+) pump SERCA2B with the activity of the translocon. This coupling may increase the local Ca(2+) concentration at the site of collagen synthesis, and a high Ca(2+) concentration may be necessary for the function of molecular chaperones involved in collagen folding. Required for proper insertion of the first transmembrane helix N-terminus of TM4SF20 into the ER lumen, may act as a ceramide sensor for regulated alternative translocation (RAT). This chain is Translocating chain-associated membrane protein 2 (TRAM2), found in Homo sapiens (Human).